Consider the following 227-residue polypeptide: Urease accessory protein UreE (227 aa).

The disordered stretch occupies residues 192 to 227 (PHGSGLHVHAIHSHGHSHSHDHDHDHNHDHDHKHKQ). Over residues 209–221 (HSHDHDHDHNHDH) the composition is skewed to basic and acidic residues.

It belongs to the UreE family.

The protein resides in the cytoplasm. In terms of biological role, involved in urease metallocenter assembly. Binds nickel. Probably functions as a nickel donor during metallocenter assembly. This is Urease accessory protein UreE from Yersinia bercovieri.